The primary structure comprises 351 residues: MVEPYSQKEQVQQVVYRILDANLDRAREGLRIIEEWCRFGLNNAQLALECKRLRQELAKWHTPELRAARDTPGDPGTELTHPQEEERASIKSVLQANFCRVEEALRVLEEYSKLYQPNIAKACKQMRYQVYTLESNLMGHQRHQLLWRSRLYLVTSPSENLLNNVEAALKGGLTLLQYRDKTADDSLRLEQARKLRQLCHIYGALFIVNDRVDLALAVDADGVHLGQQDMPIAIARQLLGSQRLIGLSTTNKEEMQAAIAEGVDYIGVGPVYETPTKVGKAATGLEYVSYAAKNCSIPWFAIGGIDANNINDAIDAGAKRVAVVRSLMQAEQPTLVTQYLLSQLNRIKPEL.

The interval 1-129 (MVEPYSQKEQ…AKACKQMRYQ (129 aa)) is unknown. The tract at residues 65–85 (LRAARDTPGDPGTELTHPQEE) is disordered. The tract at residues 130 to 351 (VYTLESNLMG…SQLNRIKPEL (222 aa)) is thiamine-phosphate synthase. Residues 177–181 (QYRDK) and Asn-209 each bind 4-amino-2-methyl-5-(diphosphooxymethyl)pyrimidine. Mg(2+)-binding residues include Asp-210 and Asp-229. Residue Ser-248 coordinates 4-amino-2-methyl-5-(diphosphooxymethyl)pyrimidine. 274–276 (TPT) contributes to the 2-[(2R,5Z)-2-carboxy-4-methylthiazol-5(2H)-ylidene]ethyl phosphate binding site. A 4-amino-2-methyl-5-(diphosphooxymethyl)pyrimidine-binding site is contributed by Lys-277. A 2-[(2R,5Z)-2-carboxy-4-methylthiazol-5(2H)-ylidene]ethyl phosphate-binding site is contributed by Gly-304.

This sequence belongs to the thiamine-phosphate synthase family. It depends on Mg(2+) as a cofactor.

The catalysed reaction is 2-[(2R,5Z)-2-carboxy-4-methylthiazol-5(2H)-ylidene]ethyl phosphate + 4-amino-2-methyl-5-(diphosphooxymethyl)pyrimidine + 2 H(+) = thiamine phosphate + CO2 + diphosphate. It catalyses the reaction 2-(2-carboxy-4-methylthiazol-5-yl)ethyl phosphate + 4-amino-2-methyl-5-(diphosphooxymethyl)pyrimidine + 2 H(+) = thiamine phosphate + CO2 + diphosphate. It carries out the reaction 4-methyl-5-(2-phosphooxyethyl)-thiazole + 4-amino-2-methyl-5-(diphosphooxymethyl)pyrimidine + H(+) = thiamine phosphate + diphosphate. It functions in the pathway cofactor biosynthesis; thiamine diphosphate biosynthesis; thiamine phosphate from 4-amino-2-methyl-5-diphosphomethylpyrimidine and 4-methyl-5-(2-phosphoethyl)-thiazole: step 1/1. Functionally, condenses 4-methyl-5-(beta-hydroxyethyl)thiazole monophosphate (THZ-P) and 2-methyl-4-amino-5-hydroxymethyl pyrimidine pyrophosphate (HMP-PP) to form thiamine monophosphate (TMP). The chain is Thiamine-phosphate synthase from Nostoc punctiforme (strain ATCC 29133 / PCC 73102).